The following is a 39-amino-acid chain: Large ribosomal subunit protein bL36 (39 aa).

Belongs to the bacterial ribosomal protein bL36 family.

This Oenococcus oeni (strain ATCC BAA-331 / PSU-1) protein is Large ribosomal subunit protein bL36.